The following is a 545-amino-acid chain: Glucose starvation modulator protein 1 (545 aa).

Positions 20-48 form a DNA-binding region, zn(2)-C6 fungal-type; sequence CGFCHEKHLQCDVGRPCQNCRKRNIASFC. Over residues 51-60 the composition is skewed to basic residues; it reads KVKRRRKRKR. Disordered stretches follow at residues 51–131 and 228–270; these read KVKR…AMKD and YISL…WQQQ. The span at 61–71 shows a compositional bias: basic and acidic residues; sequence SDASNFDKDEA. Polar residues predominate over residues 72–92; it reads ATQTLNFNTVNPGEGSSSAMT. Low complexity predominate over residues 98 to 110; the sequence is TGTTTATTTRTTT. Over residues 111–125 the composition is skewed to polar residues; sequence NFRSESKASSSTENI. Positions 257-270 are enriched in low complexity; it reads QQKESQQMQLWQQQ. The PAS domain occupies 416–486; sequence ELENMSKLVN…DLFHEHLAFG (71 aa).

Belongs to the ERT1/acuK family.

It localises to the nucleus. Functionally, transcription factor which regulates nonfermentable carbon utilization. The chain is Glucose starvation modulator protein 1 (GSM1) from Zygosaccharomyces rouxii (strain ATCC 2623 / CBS 732 / NBRC 1130 / NCYC 568 / NRRL Y-229).